Here is a 1201-residue protein sequence, read N- to C-terminus: uncharacterized protein (1201 aa).

The chain crosses the membrane as a helical span at residues 140 to 160 (IIINLIFFFAFIIVGIYLFKP). Coiled-coil stretches lie at residues 420 to 459 (QKKQ…AELN) and 536 to 574 (AIKA…ITKM).

It is found in the cell membrane. This is an uncharacterized protein from Bacillus subtilis (strain 168).